Reading from the N-terminus, the 230-residue chain is Type II restriction enzyme SinI (230 aa).

The enzyme catalyses Endonucleolytic cleavage of DNA to give specific double-stranded fragments with terminal 5'-phosphates.. Its function is as follows. A P subtype restriction enzyme that recognizes the double-stranded sequence 5'-GGWCC-3' and cleaves after G-1. This is Type II restriction enzyme SinI (sinIR) from Salmonella infantis.